The primary structure comprises 138 residues: MIIGIGSDLSDIRRIQASLDRFGDRFRHRVFTEIERTRSDRKADAAASYAKRFAAKEACAKALGTGMRRGVFWRDMGVVNMRSGQPTMALTGGALRRLEEITPPGMTAHIHLSLTDDHPYAQAFVIIEALPAAPSAAE.

Residues Asp8 and Glu57 each contribute to the Mg(2+) site.

The protein belongs to the P-Pant transferase superfamily. AcpS family. Mg(2+) is required as a cofactor.

It localises to the cytoplasm. The enzyme catalyses apo-[ACP] + CoA = holo-[ACP] + adenosine 3',5'-bisphosphate + H(+). In terms of biological role, transfers the 4'-phosphopantetheine moiety from coenzyme A to a Ser of acyl-carrier-protein. The chain is Holo-[acyl-carrier-protein] synthase from Phenylobacterium zucineum (strain HLK1).